The following is a 416-amino-acid chain: Tyrosine--tRNA ligase (416 aa).

Tyr40 lines the L-tyrosine pocket. A 'HIGH' region motif is present at residues Ala45–Ser54. L-tyrosine contacts are provided by Tyr177 and Gln181. Positions Lys237 to Ser241 match the 'KMSKS' region motif. Lys240 contacts ATP. Positions Ile351–Leu415 constitute an S4 RNA-binding domain.

The protein belongs to the class-I aminoacyl-tRNA synthetase family. TyrS type 1 subfamily. In terms of assembly, homodimer.

The protein resides in the cytoplasm. The catalysed reaction is tRNA(Tyr) + L-tyrosine + ATP = L-tyrosyl-tRNA(Tyr) + AMP + diphosphate + H(+). Its function is as follows. Catalyzes the attachment of tyrosine to tRNA(Tyr) in a two-step reaction: tyrosine is first activated by ATP to form Tyr-AMP and then transferred to the acceptor end of tRNA(Tyr). The polypeptide is Tyrosine--tRNA ligase (Roseobacter denitrificans (strain ATCC 33942 / OCh 114) (Erythrobacter sp. (strain OCh 114))).